The primary structure comprises 34 residues: Photosystem II reaction center protein M (34 aa).

The helical transmembrane segment at 5–25 threads the bilayer; the sequence is ILGLMAVALFILIPTSFLLIL.

Belongs to the PsbM family. As to quaternary structure, PSII is composed of 1 copy each of membrane proteins PsbA, PsbB, PsbC, PsbD, PsbE, PsbF, PsbH, PsbI, PsbJ, PsbK, PsbL, PsbM, PsbT, PsbX, PsbY, PsbZ, Psb30/Ycf12, at least 3 peripheral proteins of the oxygen-evolving complex and a large number of cofactors. It forms dimeric complexes.

It is found in the plastid. It localises to the chloroplast thylakoid membrane. In terms of biological role, one of the components of the core complex of photosystem II (PSII). PSII is a light-driven water:plastoquinone oxidoreductase that uses light energy to abstract electrons from H(2)O, generating O(2) and a proton gradient subsequently used for ATP formation. It consists of a core antenna complex that captures photons, and an electron transfer chain that converts photonic excitation into a charge separation. This subunit is found at the monomer-monomer interface. The chain is Photosystem II reaction center protein M from Tupiella akineta (Green alga).